The chain runs to 472 residues: ATP synthase subunit beta (472 aa).

156–163 (GGAGVGKT) contributes to the ATP binding site.

This sequence belongs to the ATPase alpha/beta chains family. In terms of assembly, F-type ATPases have 2 components, CF(1) - the catalytic core - and CF(0) - the membrane proton channel. CF(1) has five subunits: alpha(3), beta(3), gamma(1), delta(1), epsilon(1). CF(0) has three main subunits: a(1), b(2) and c(9-12). The alpha and beta chains form an alternating ring which encloses part of the gamma chain. CF(1) is attached to CF(0) by a central stalk formed by the gamma and epsilon chains, while a peripheral stalk is formed by the delta and b chains.

The protein localises to the cell membrane. The enzyme catalyses ATP + H2O + 4 H(+)(in) = ADP + phosphate + 5 H(+)(out). Its function is as follows. Produces ATP from ADP in the presence of a proton gradient across the membrane. The catalytic sites are hosted primarily by the beta subunits. The protein is ATP synthase subunit beta of Symbiobacterium thermophilum (strain DSM 24528 / JCM 14929 / IAM 14863 / T).